The chain runs to 551 residues: Adenine deaminase (551 aa).

This sequence belongs to the metallo-dependent hydrolases superfamily. Adenine deaminase family. The cofactor is Mn(2+).

The enzyme catalyses adenine + H2O + H(+) = hypoxanthine + NH4(+). The chain is Adenine deaminase from Methanosarcina barkeri (strain Fusaro / DSM 804).